The sequence spans 479 residues: Protein C-ets-2 (479 aa).

Residues 88 to 173 (DTFSGFTKEQ…EHLEQMIKDS (86 aa)) form the PNT domain. Residues 373–453 (IQLWQFLLEL…SGKRYVYRFV (81 aa)) constitute a DNA-binding region (ETS).

This sequence belongs to the ETS family.

Its subcellular location is the nucleus. In terms of biological role, probable transcription factor. This Gallus gallus (Chicken) protein is Protein C-ets-2 (ETS2).